Reading from the N-terminus, the 1069-residue chain is Adenylate-forming reductase (1069 aa).

Positions 20-391 (HPEDPKAVKS…WKLRQDINYR (372 aa)) are adenylation (A) domain. Residues H262, 357–358 (AH), T362, and 437–440 (AVGR) each bind AMP. The region spanning 576 to 656 (DSLEEDLKDL…KLGASLRHLA (81 aa)) is the Carrier domain. At S612 the chain carries O-(pantetheine 4'-phosphoryl)serine. The segment at 686 to 1032 (TVLLTGSTGN…TGKVILDTSR (347 aa)) is reductase (R) domain. Residues 693 to 696 (TGNL), R719, 785 to 787 (NAW), Y863, and K867 each bind NADP(+).

It belongs to the adenylate-forming reductase family.

The catalysed reaction is 5-methylorsellinate + ATP + NADPH + H(+) = 2,4-dihydroxy 5,6-dimethylbenzaldehyde + AMP + diphosphate + NADP(+). The protein operates within secondary metabolite biosynthesis. Non-canonical non-ribosomal peptide synthetase; part of the cluster A that mediates the biosynthesis of azasperpyranones, members of the azaphilone family that exhibit anti-cancer activities. Azasperpyranones are synthesized by 2 clusters, A and B. Cluster A is responsible for the production of the polyhydric phenol moiety while the azaphilonoid scaffold is produced by the cluster B. The non-reducing polyketide synthase ATEG_03629 produces 5-methyl orsellinic acid, which is then reduced to 5-methyl orsellinic aldehyde by the NRPS-like protein ATEG_03630. 5-methyl orsellinic aldehyde is then first hydroxylated by the FAD-dependent monooxygenase ATEG_03635 and subsequently hydroxylated by the cytochrome P450 monooxygenase ATEG_03631 to produce the unstable polyhydric phenol precursor of azasperpyranones. On the other hand, the polyketide synthase ATEG_07659 is responsible for producing the 3,5-dimethyloctadienone moiety from acetyl-CoA, three malonyl-CoA, and two S-adenosyl methionines (SAM). The 3,5-dimethyloctadienone moiety is then loaded onto the SAT domain of ATEG_07661 and extended with four malonyl-CoA and one SAM, which leads to the formation of 2,4-dihydroxy-6-(5,7-dimethyl-2-oxo-trans-3-trans-5-nonadienyl)-3-methylbenzaldehyde (compound 8) after reductive release and aldol condensation. The FAD-dependent monooxygenase ATEG_07662 is the next enzyme in the biosynthesis sequence and hydroxylates the side chain at the benzylic position of compound 8. In Aspergillus nidulans, afoF, the ortholog of the FAD-dependent oxygenase ATEG_07660, is the key enzyme for the biosynthesis of asperfuranone by catalyzing the hydroxylation at C-8 of to prevent the formation of a six-membered ring hemiacetal intermediate and thus facilitating the formation of a five-membered ring to produce asperfuranone. In Aspergillus terreus, ATEG_07660 is probably not functional, which leads to the formation of the six-membered ring hemiacetal intermediate presperpyranone instead of asperfuranone. Finally, ATEG_03636 is involved in the condensation of the polyhydric phenol moiety produced by cluster A and the perasperpyranone precursor produced by cluster B, to yield azasperpyranone A. Further modifications of azasperpyranone A result in the production of derivatives, including azasperpyranone B to F. This chain is Adenylate-forming reductase, found in Aspergillus terreus (strain NIH 2624 / FGSC A1156).